The sequence spans 367 residues: Leucine-rich repeat-containing protein 28 (367 aa).

9 LRR repeats span residues 16-36 (KHKN…ELLK), 42-63 (YLER…LAQK), 66-87 (NLVE…IGSL), 89-110 (KLQC…IGRL), 112-133 (ALRH…VGDL), 135-156 (ELQT…LHMC), 158-180 (SLQY…CQLP), 181-202 (SLNE…LGRS), and 204-226 (ELQY…LYNK).

The protein is Leucine-rich repeat-containing protein 28 (LRRC28) of Homo sapiens (Human).